Reading from the N-terminus, the 202-residue chain is Complement component C8 gamma chain (202 aa).

The first 23 residues, 1-23, serve as a signal peptide directing secretion; the sequence is MVLRGRAVLLAVLLAAGSLGRWA. C96 and C188 are oxidised to a cystine. N173 carries N-linked (GlcNAc...) asparagine glycosylation.

It belongs to the calycin superfamily. Lipocalin family. As to quaternary structure, heterotrimer of 3 chains: alpha (C8A), beta (C8B) and gamma (C8G); the alpha and gamma chains are disulfide bonded. Component of the membrane attack complex (MAC), composed of complement C5b, C6, C7, C8A, C8B, C8G and multiple copies of the pore-forming subunit C9.

It is found in the secreted. The protein resides in the target cell membrane. Membrane attack complex (MAC) assembly is inhibited by CD59, thereby protecting self-cells from damage during complement activation. MAC assembly is also inhibited by clusterin (CLU) chaperones that inhibit polymerization of C9. In terms of biological role, component of the membrane attack complex (MAC), a multiprotein complex activated by the complement cascade, which inserts into a target cell membrane and forms a pore, leading to target cell membrane rupture and cell lysis. The MAC is initiated by proteolytic cleavage of C5 into complement C5b in response to the classical, alternative, lectin and GZMK complement pathways. The complement pathways consist in a cascade of proteins that leads to phagocytosis and breakdown of pathogens and signaling that strengthens the adaptive immune system. C8G, together with C8A and C8B, inserts into the target membrane, but does not form pores by itself. During MAC assembly, associates with C5b, C6 and C7 to form the C5b8 intermediate complex that inserts into the target membrane and traverses the bilayer increasing membrane rigidity. This Oryctolagus cuniculus (Rabbit) protein is Complement component C8 gamma chain (C8G).